The chain runs to 251 residues: 1-(5-phosphoribosyl)-5-[(5-phosphoribosylamino)methylideneamino] imidazole-4-carboxamide isomerase (251 aa).

Aspartate 8 (proton acceptor) is an active-site residue. Aspartate 131 acts as the Proton donor in catalysis.

Belongs to the HisA/HisF family.

The protein localises to the cytoplasm. It carries out the reaction 1-(5-phospho-beta-D-ribosyl)-5-[(5-phospho-beta-D-ribosylamino)methylideneamino]imidazole-4-carboxamide = 5-[(5-phospho-1-deoxy-D-ribulos-1-ylimino)methylamino]-1-(5-phospho-beta-D-ribosyl)imidazole-4-carboxamide. Its pathway is amino-acid biosynthesis; L-histidine biosynthesis; L-histidine from 5-phospho-alpha-D-ribose 1-diphosphate: step 4/9. This chain is 1-(5-phosphoribosyl)-5-[(5-phosphoribosylamino)methylideneamino] imidazole-4-carboxamide isomerase, found in Burkholderia cenocepacia (strain ATCC BAA-245 / DSM 16553 / LMG 16656 / NCTC 13227 / J2315 / CF5610) (Burkholderia cepacia (strain J2315)).